Reading from the N-terminus, the 384-residue chain is MSWQEKINAALDARRTADALRRRYPVAQGAGRWLVADDRQYLNFSSNDYLGLSHHPQIIRAWQQGAEKFGVGSGGSGHVSGYSVVHQALEEELAEWLGYSRALLFISGFAANQAVIAAMMAKEDRIVADRLSHASLLEAASLSPSQLRRFTHNDVAHLARLLASPCPGQQLVVTEGVFSMDGDSAPLAEIQQVTQQHNGWLMVDDAHGTGVIGEQGRGSCWLQKVKPELLVVTFGKGFGVSGAAVLCSSTVADYLLQFARHLIYSTSMPPAQAQALRASLAVIRRDEGDARREKLVSLIARFRAGVQDLPFTLADSCSAIQPLIVGDNSRALQLAEKLRQQGCWVTAIRPPTVPAGTARLRLTLTAAHEMQDIDRLLEVLHGNG.

Arginine 21 contributes to the substrate binding site. 108 to 109 (GF) lines the pyridoxal 5'-phosphate pocket. A substrate-binding site is contributed by histidine 133. Residues serine 179, histidine 207, and threonine 233 each coordinate pyridoxal 5'-phosphate. Lysine 236 is subject to N6-(pyridoxal phosphate)lysine. Threonine 352 contributes to the substrate binding site.

Belongs to the class-II pyridoxal-phosphate-dependent aminotransferase family. BioF subfamily. As to quaternary structure, homodimer. The cofactor is pyridoxal 5'-phosphate.

The catalysed reaction is 6-carboxyhexanoyl-[ACP] + L-alanine + H(+) = (8S)-8-amino-7-oxononanoate + holo-[ACP] + CO2. It functions in the pathway cofactor biosynthesis; biotin biosynthesis. Catalyzes the decarboxylative condensation of pimeloyl-[acyl-carrier protein] and L-alanine to produce 8-amino-7-oxononanoate (AON), [acyl-carrier protein], and carbon dioxide. In Shigella sonnei (strain Ss046), this protein is 8-amino-7-oxononanoate synthase.